A 168-amino-acid chain; its full sequence is MPRSQINGNFIDKTFSIVANILLRIIPTTSGEKEAFTYYRDGMSAQSEGNYAEALQNYYEATRLEIDPYDRSYILYNIGLIHTSNGEHTKALEYYFRALERNPFLPQAFNNMAVICHYRGEQAIRQGDSEIAEAWSDQAAEYWKQAISLTPGNYIEAHNWLKITGRFE.

TPR repeat units follow at residues 35–68 (AFTY…EIDP), 72–105 (SYIL…NPFL), and 120–153 (GEQA…TPGN).

Belongs to the Ycf3 family.

The protein localises to the plastid. Its subcellular location is the chloroplast thylakoid membrane. Functionally, essential for the assembly of the photosystem I (PSI) complex. May act as a chaperone-like factor to guide the assembly of the PSI subunits. In Piper cenocladum (Ant piper), this protein is Photosystem I assembly protein Ycf3.